Here is a 267-residue protein sequence, read N- to C-terminus: 2-keto-3-deoxy-L-rhamnonate aldolase (267 aa).

Histidine 49 (proton acceptor) is an active-site residue. Glutamine 151 serves as a coordination point for substrate. A Mg(2+)-binding site is contributed by glutamate 153. 2 residues coordinate substrate: alanine 178 and aspartate 179. Position 179 (aspartate 179) interacts with Mg(2+).

This sequence belongs to the HpcH/HpaI aldolase family. KDR aldolase subfamily. Homohexamer. Mg(2+) is required as a cofactor.

The enzyme catalyses 2-dehydro-3-deoxy-L-rhamnonate = (S)-lactaldehyde + pyruvate. Its function is as follows. Catalyzes the reversible retro-aldol cleavage of 2-keto-3-deoxy-L-rhamnonate (KDR) to pyruvate and lactaldehyde. This is 2-keto-3-deoxy-L-rhamnonate aldolase from Shigella dysenteriae serotype 1 (strain Sd197).